A 117-amino-acid polypeptide reads, in one-letter code: Small ribosomal subunit protein uS17 (117 aa).

The tract at residues 1–42 (MMAEAKKAAPKKAATAASKDADAKGPKHTPPNPKVRGRRKTR) is disordered.

It belongs to the universal ribosomal protein uS17 family. Part of the 30S ribosomal subunit.

In terms of biological role, one of the primary rRNA binding proteins, it binds specifically to the 5'-end of 16S ribosomal RNA. This is Small ribosomal subunit protein uS17 from Mycolicibacterium paratuberculosis (strain ATCC BAA-968 / K-10) (Mycobacterium paratuberculosis).